Reading from the N-terminus, the 471-residue chain is Ribosomal protein uS12 methylthiotransferase RimO (471 aa).

One can recognise an MTTase N-terminal domain in the interval P23–P138. Residues C32, C68, C97, C169, C173, and C176 each contribute to the [4Fe-4S] cluster site. In terms of domain architecture, Radical SAM core spans L155–E396. Residues R399–L471 form the TRAM domain.

It belongs to the methylthiotransferase family. RimO subfamily. [4Fe-4S] cluster is required as a cofactor.

It localises to the cytoplasm. The enzyme catalyses L-aspartate(89)-[ribosomal protein uS12]-hydrogen + (sulfur carrier)-SH + AH2 + 2 S-adenosyl-L-methionine = 3-methylsulfanyl-L-aspartate(89)-[ribosomal protein uS12]-hydrogen + (sulfur carrier)-H + 5'-deoxyadenosine + L-methionine + A + S-adenosyl-L-homocysteine + 2 H(+). In terms of biological role, catalyzes the methylthiolation of an aspartic acid residue of ribosomal protein uS12. This is Ribosomal protein uS12 methylthiotransferase RimO from Methylibium petroleiphilum (strain ATCC BAA-1232 / LMG 22953 / PM1).